We begin with the raw amino-acid sequence, 259 residues long: Imidazole glycerol phosphate synthase subunit HisF (259 aa).

Catalysis depends on residues aspartate 11 and aspartate 130.

Belongs to the HisA/HisF family. In terms of assembly, heterodimer of HisH and HisF.

Its subcellular location is the cytoplasm. The enzyme catalyses 5-[(5-phospho-1-deoxy-D-ribulos-1-ylimino)methylamino]-1-(5-phospho-beta-D-ribosyl)imidazole-4-carboxamide + L-glutamine = D-erythro-1-(imidazol-4-yl)glycerol 3-phosphate + 5-amino-1-(5-phospho-beta-D-ribosyl)imidazole-4-carboxamide + L-glutamate + H(+). The protein operates within amino-acid biosynthesis; L-histidine biosynthesis; L-histidine from 5-phospho-alpha-D-ribose 1-diphosphate: step 5/9. In terms of biological role, IGPS catalyzes the conversion of PRFAR and glutamine to IGP, AICAR and glutamate. The HisF subunit catalyzes the cyclization activity that produces IGP and AICAR from PRFAR using the ammonia provided by the HisH subunit. The sequence is that of Imidazole glycerol phosphate synthase subunit HisF from Polaromonas sp. (strain JS666 / ATCC BAA-500).